The sequence spans 364 residues: O-methyltransferase 1 (364 aa).

Residues Ser183, Gly207, Asp230, Asp250, and Lys264 each coordinate S-adenosyl-L-homocysteine. Residue Asp230 participates in S-adenosyl-L-methionine binding. Residue His268 is the Proton acceptor of the active site.

The protein belongs to the class I-like SAM-binding methyltransferase superfamily. Cation-independent O-methyltransferase family. In terms of assembly, homodimer.

It carries out the reaction dopamine + S-adenosyl-L-methionine = 3-methoxytyramine + S-adenosyl-L-homocysteine + H(+). The enzyme catalyses 3,4-dihydroxy-5-methoxyphenethylamine + S-adenosyl-L-methionine = 4-hydroxy-3,5-dimethoxyphenethylamine + S-adenosyl-L-homocysteine + H(+). It functions in the pathway aromatic compound metabolism. The protein operates within alkaloid biosynthesis. In terms of biological role, O-methyltransferase participating in the biosynthesis of natural products derived from phenylethylamine, including mescaline, a natural hallucinogen potentially used in psychotherapeutic treatments. Catalyzes the O-methylation of mescaline meta hydroxyl groups, using dopamine and 3,4-dihydroxy-5-methoxyphenethylamine as substrates. This is O-methyltransferase 1 from Lophophora williamsii (Peyote).